The chain runs to 499 residues: Gamma-aminobutyric acid receptor subunit beta (499 aa).

A signal peptide spans 1–23 (MWGIIVPFFSASLMCSLVAVVRC). At 24–251 (QQDTDHFANV…IFQLQRNIGY (228 aa)) the chain is on the extracellular side. N-linked (GlcNAc...) asparagine glycosylation is found at Asn32, Asn98, Asn106, and Asn152. The cysteines at positions 167 and 181 are disulfide-linked. A run of 3 helical transmembrane segments spans residues 252 to 273 (FIFQTYLPSILIVMLSWVSFWI), 278 to 299 (TSARVALGITTVLTMTTISNGV), and 311 to 333 (AIDIYLVMCFVFVFAALLEYAAV). Residues 334–475 (NYTYWGARAK…RVQDVNTIDK (142 aa)) lie on the Cytoplasmic side of the membrane. Residues 476 to 499 (YARLMFPLLFIIFNTSYWSVYLLT) form a helical membrane-spanning segment.

This sequence belongs to the ligand-gated ion channel (TC 1.A.9) family. Gamma-aminobutyric acid receptor (TC 1.A.9.5) subfamily. As to quaternary structure, generally pentameric. There are five types of GABA(A) receptor chains: alpha, beta, gamma, delta, and rho.

The protein localises to the postsynaptic cell membrane. The protein resides in the cell membrane. GABA, an inhibitory neurotransmitter, mediates neuronal inhibition by binding to the GABA/benzodiazepine receptor and opening an integral chloride channel. The sequence is that of Gamma-aminobutyric acid receptor subunit beta from Lymnaea stagnalis (Great pond snail).